We begin with the raw amino-acid sequence, 312 residues long: Glyoxylate/hydroxypyruvate reductase A (312 aa).

R227 is a catalytic residue. Catalysis depends on H275, which acts as the Proton donor.

The protein belongs to the D-isomer specific 2-hydroxyacid dehydrogenase family. GhrA subfamily.

Its subcellular location is the cytoplasm. It catalyses the reaction glycolate + NADP(+) = glyoxylate + NADPH + H(+). The enzyme catalyses (R)-glycerate + NAD(+) = 3-hydroxypyruvate + NADH + H(+). It carries out the reaction (R)-glycerate + NADP(+) = 3-hydroxypyruvate + NADPH + H(+). In terms of biological role, catalyzes the NADPH-dependent reduction of glyoxylate and hydroxypyruvate into glycolate and glycerate, respectively. This Escherichia coli O17:K52:H18 (strain UMN026 / ExPEC) protein is Glyoxylate/hydroxypyruvate reductase A.